A 302-amino-acid polypeptide reads, in one-letter code: Quinolinate synthase (302 aa).

His-25 and Ser-42 together coordinate iminosuccinate. Residue Cys-87 coordinates [4Fe-4S] cluster. Iminosuccinate-binding positions include Tyr-113–Asn-115 and Ser-130. Residue Cys-172 coordinates [4Fe-4S] cluster. Iminosuccinate contacts are provided by residues His-198–Glu-200 and Thr-215. Cys-260 provides a ligand contact to [4Fe-4S] cluster.

This sequence belongs to the quinolinate synthase family. Type 2 subfamily. The cofactor is [4Fe-4S] cluster.

The protein localises to the cytoplasm. The catalysed reaction is iminosuccinate + dihydroxyacetone phosphate = quinolinate + phosphate + 2 H2O + H(+). It functions in the pathway cofactor biosynthesis; NAD(+) biosynthesis; quinolinate from iminoaspartate: step 1/1. In terms of biological role, catalyzes the condensation of iminoaspartate with dihydroxyacetone phosphate to form quinolinate. The sequence is that of Quinolinate synthase from Methanoregula boonei (strain DSM 21154 / JCM 14090 / 6A8).